The chain runs to 853 residues: DNA mismatch repair protein MutS (853 aa).

614-621 (GPNMGGKS) lines the ATP pocket.

It belongs to the DNA mismatch repair MutS family.

This protein is involved in the repair of mismatches in DNA. It is possible that it carries out the mismatch recognition step. This protein has a weak ATPase activity. This is DNA mismatch repair protein MutS from Escherichia coli O6:K15:H31 (strain 536 / UPEC).